The chain runs to 214 residues: Large ribosomal subunit protein uL4 (214 aa).

The disordered stretch occupies residues 56–86 (THKVKNRAEVSGTGKKPWKQKSTGKARAGSK). The segment covering 71–85 (KPWKQKSTGKARAGS) has biased composition (basic residues).

Belongs to the universal ribosomal protein uL4 family. In terms of assembly, part of the 50S ribosomal subunit.

One of the primary rRNA binding proteins, this protein initially binds near the 5'-end of the 23S rRNA. It is important during the early stages of 50S assembly. It makes multiple contacts with different domains of the 23S rRNA in the assembled 50S subunit and ribosome. In terms of biological role, forms part of the polypeptide exit tunnel. The sequence is that of Large ribosomal subunit protein uL4 from Mesomycoplasma hyopneumoniae (strain 232) (Mycoplasma hyopneumoniae).